The chain runs to 299 residues: Tyrosine recombinase XerD (299 aa).

In terms of domain architecture, Core-binding (CB) spans 2–89; sequence ETVNNNLQQF…AIRSFHQFLL (88 aa). The Tyr recombinase domain occupies 110–293; that stretch reads RLPKALTIEE…TKTRMRDVYA (184 aa). Catalysis depends on residues R150, K174, H245, R248, and H271. Y280 acts as the O-(3'-phospho-DNA)-tyrosine intermediate in catalysis.

Belongs to the 'phage' integrase family. XerD subfamily. In terms of assembly, forms a cyclic heterotetrameric complex composed of two molecules of XerC and two molecules of XerD.

The protein resides in the cytoplasm. Site-specific tyrosine recombinase, which acts by catalyzing the cutting and rejoining of the recombining DNA molecules. The XerC-XerD complex is essential to convert dimers of the bacterial chromosome into monomers to permit their segregation at cell division. It also contributes to the segregational stability of plasmids. The polypeptide is Tyrosine recombinase XerD (Halalkalibacterium halodurans (strain ATCC BAA-125 / DSM 18197 / FERM 7344 / JCM 9153 / C-125) (Bacillus halodurans)).